The following is a 360-amino-acid chain: Phospho-N-acetylmuramoyl-pentapeptide-transferase (360 aa).

The next 10 membrane-spanning stretches (helical) occupy residues 27–47, 71–91, 98–118, 142–162, 168–188, 199–219, 236–256, 263–283, 288–308, and 338–358; these read VMAV…LIRF, TPTM…LLWA, VWIV…DDYL, LVLA…TFVM, YMPY…VGSS, GLAI…AYLT, ASEL…FLWF, VFMG…IAVL, ILLV…ILQV, and VIVR…VTLK.

The protein belongs to the glycosyltransferase 4 family. MraY subfamily. Mg(2+) is required as a cofactor.

The protein resides in the cell inner membrane. It catalyses the reaction UDP-N-acetyl-alpha-D-muramoyl-L-alanyl-gamma-D-glutamyl-meso-2,6-diaminopimeloyl-D-alanyl-D-alanine + di-trans,octa-cis-undecaprenyl phosphate = di-trans,octa-cis-undecaprenyl diphospho-N-acetyl-alpha-D-muramoyl-L-alanyl-D-glutamyl-meso-2,6-diaminopimeloyl-D-alanyl-D-alanine + UMP. Its pathway is cell wall biogenesis; peptidoglycan biosynthesis. Functionally, catalyzes the initial step of the lipid cycle reactions in the biosynthesis of the cell wall peptidoglycan: transfers peptidoglycan precursor phospho-MurNAc-pentapeptide from UDP-MurNAc-pentapeptide onto the lipid carrier undecaprenyl phosphate, yielding undecaprenyl-pyrophosphoryl-MurNAc-pentapeptide, known as lipid I. The chain is Phospho-N-acetylmuramoyl-pentapeptide-transferase from Psychromonas ingrahamii (strain DSM 17664 / CCUG 51855 / 37).